The primary structure comprises 365 residues: MEGQSVEELLAKAEQDEAEKLQRITVHKELELQFDLGNLLASDRNPPTGLRCAGPTPEAELQALARDNTQLLINQLWQLPTERVEEAIVARLPEPTTRLPREKPLPRPRPLTRWQQFARLKGIRPKKKTNLVWDEVSGQWRRRWGYQRARDDTKEWLIEVPGNADPLEDQFAKRIQAKKERVAKNELNRLRNLARAHKMQLPSAAGLHPTGHQSKEELGRAMQVAKVSTASVGRFQERLPKEKVPRGSGKKRKFQPLFGDFAAEKKNQLELLRVMNSKKPQLDVTRATNKQMREEDQEEAAKRRKMSQKGKRKGGRQGPGGKRKGGPPSQGGKRKGGLGGKMNSGPPGLGGKRKGGQRPGGKRRK.

M1 is subject to N-acetylmethionine. Position 5 is a phosphoserine (S5). Glycyl lysine isopeptide (Lys-Gly) (interchain with G-Cter in SUMO2) cross-links involve residues K154 and K226. Residues 233–253 are disordered; it reads GRFQERLPKEKVPRGSGKKRK. Positions 235-245 are enriched in basic and acidic residues; that stretch reads FQERLPKEKVP. A Glycyl lysine isopeptide (Lys-Gly) (interchain with G-Cter in SUMO2) cross-link involves residue K266. Citrulline is present on R273. Residues 280–365 are disordered; the sequence is PQLDVTRATN…GQRPGGKRRK (86 aa). Positions 302-325 are enriched in basic residues; that stretch reads KRRKMSQKGKRKGGRQGPGGKRKG. The span at 337-350 shows a compositional bias: gly residues; it reads GLGGKMNSGPPGLG. A compositionally biased stretch (basic residues) spans 351–365; sequence GKRKGGQRPGGKRRK.

The protein belongs to the RRS1 family. In terms of assembly, component of a hexameric 5S RNP precursor complex, composed of 5S RNA, RRS1, RPF2/BXDC1, RPL5, RPL11 and HEATR3; this complex acts as a precursor for ribosome assembly. In terms of processing, citrullinated by PADI4.

The protein localises to the nucleus. The protein resides in the nucleolus. Involved in ribosomal large subunit assembly. May regulate the localization of the 5S RNP/5S ribonucleoprotein particle to the nucleolus. The protein is Ribosome biogenesis regulatory protein homolog (RRS1) of Homo sapiens (Human).